A 266-amino-acid polypeptide reads, in one-letter code: Integral membrane protein 2B (266 aa).

Topologically, residues 1–54 (MVKVTFNSALAQKEAKKDESKSGEEALIIPPDAVAVDCKDPDEVVPVGQRRAWC) are cytoplasmic. Residues 55–75 (WCMCFGLAFMLAGVILGGAYL) form a helical; Signal-anchor for type II membrane protein membrane-spanning segment. The Lumenal portion of the chain corresponds to 76-266 (YKYFAFQPDD…RFAVETLICP (191 aa)). The necessary for interaction with APP and inhibitor effects on APP processing stretch occupies residues 102-134 (EPSADAPASRYQTIEENIKIFEEDEVEFISVPV). A BRICHOS domain is found at 137–231 (FADSDPANIV…LCHDKETYKL (95 aa)). 2 disulfides stabilise this stretch: Cys-164/Cys-223 and Cys-248/Cys-265. N-linked (GlcNAc...) asparagine glycosylation occurs at Asn-170.

Belongs to the ITM2 family. In terms of assembly, homodimer; disulfide-linked. Interacts with SPPL2A and SPPL2B. Interacts with APP. Mature BRI2 (mBRI2) interacts with the APP amyloid-beta A4 protein; the interaction occurs at the cell surface and in the endocytic compartments and enable alpha- and beta-secretase-induced APP cleavage inhibition. Mature BRI2 (mBRI2) interacts with the APP C99; the interaction occurs in the endocytic compartments and enable gamma-secretase-induced C99 cleavage inhibition. May form heterodimers with Bri23 peptide and APP amyloid-beta protein 40. Interacts with ADAM7 in sperm; the interaction increases following capacitation. The ectodomain C-terminal part of the imBRI2 is processed by furin producing a secreted Bri23 peptide and a mature BRI2, membrane form (mBRI2). The remaining part of the ectodomain of mBRI2 containing the BRICHOS domain is cleaved by ADAM10 and is secreted (BRI2C, soluble form). The membrane-bound N-terminal fragment (BRI2C, membrane form) is further proteolytically processed by SPPL2A and SPPL2B through regulated intramembrane proteolysis producing a secreted C-peptide and a BRI2 intracellular domain (BRI2 ICD) released in the cytosol. Shedding by ADAM10 facilitates intramembrane cleavage but is not absolutely required for BRI2 ICD generation. Post-translationally, glycosylation at Asn-170 is important for cell surface localization, but doesn't affect furin- and ADAM10-induced proteolytic processing.

It localises to the golgi apparatus membrane. The protein resides in the cell membrane. The protein localises to the endosome membrane. It is found in the secreted. Its function is as follows. Plays a regulatory role in the processing of the amyloid-beta A4 precursor protein (APP) and acts as an inhibitor of the amyloid-beta peptide aggregation and fibrils deposition. Plays a role in the induction of neurite outgrowth. Functions as a protease inhibitor by blocking access of secretases to APP cleavage sites. In terms of biological role, mature BRI2 (mBRI2) functions as a modulator of the amyloid-beta A4 precursor protein (APP) processing leading to a strong reduction in the secretion of secretase-processed amyloid-beta protein 40 and amyloid-beta protein 42. Bri23 peptide prevents aggregation of APP amyloid-beta protein 42 into toxic oligomers. The polypeptide is Integral membrane protein 2B (ITM2B) (Bos taurus (Bovine)).